Consider the following 592-residue polypeptide: Keratin, type II cytoskeletal 5 (592 aa).

Residues 1–18 (MSRQSSVSFRSGGSRSFS) show a composition bias toward low complexity. Residues 1-20 (MSRQSSVSFRSGGSRSFSTA) are disordered. The head stretch occupies residues 1 to 169 (MSRQSSVSFR…DPSIQRVRTE (169 aa)). 4 positions are modified to phosphoserine: S5, S8, S16, and S21. Position 24 is a phosphothreonine; by CDK1 (T24). A phosphoserine mark is found at S26, S36, S50, S64, S71, S75, and S82. T153 is subject to Phosphothreonine; by CDK1. At T168 the chain carries Phosphothreonine; by AURKB. Residues 170-205 (EREQIKTLNNKFASFIDKVRFLEQQNKVLDTKWTLL) are coil 1A. One can recognise an IF rod domain in the interval 170–483 (EREQIKTLNN…KLLEGEECRL (314 aa)). Residues 206–224 (QEQGTKTVRQNLEPLFEQY) form a linker 1 region. A coil 1B region spans residues 225-317 (INNLRRQLDS…FFDAELSQMQ (93 aa)). The linker 12 stretch occupies residues 318 to 340 (THVSDTSVVLSMDNNRNLDLDSI). A coil 2 region spans residues 341-479 (IAEVKAQYEE…ATYRKLLEGE (139 aa)). The interval 480–592 (ECRLSGEGVG…TSSSRKSFKS (113 aa)) is tail. Residues 568–592 (GSGGGSSSSVKFVSTTSSSRKSFKS) form a disordered region. Positions 574–592 (SSSVKFVSTTSSSRKSFKS) are enriched in low complexity.

It belongs to the intermediate filament family. Heterodimer of a type I and a type II keratin. Heterodimer with type I keratin KRT25 leading to the formation of keratin intermediate filament (KIF) network. Forms a heterodimer (via 2B domains) with KRT14 (via 2B domains). Interacts with TCHP. Interacts with EPPK1. Interacts with AMELX. Interacts with PKP1 (via N-terminus) and PKP2. Phosphorylated by CDK1, AURKB and Rho-kinase, phosphorylation is regulated by the cell cycle. Thr-24 phosphorylation, mediated by CDK1, peaks during prometaphase or metaphase cells with phosphorylated filamentous structures evident throughout the cytoplasm during early mitosis. CDK1 phosphorylates Thr-24 in mitotic cells at the site of injury. Post-translationally, O-glycosylated.

The protein localises to the cytoplasm. Functionally, required for the formation of keratin intermediate filaments in the basal epidermis and maintenance of the skin barrier in response to mechanical stress. Regulates the recruitment of Langerhans cells to the epidermis, potentially by modulation of the abundance of macrophage chemotactic cytokines, macrophage inflammatory cytokines and CTNND1 localization in keratinocytes. In Pan troglodytes (Chimpanzee), this protein is Keratin, type II cytoskeletal 5 (KRT5).